We begin with the raw amino-acid sequence, 62 residues long: High-potential iron-sulfur protein (62 aa).

[4Fe-4S] cluster is bound by residues Cys22, Cys25, Cys40, and Cys55.

This sequence belongs to the high-potential iron-sulfur protein (HiPIP) family. Homodimer.

Its function is as follows. Specific class of high-redox-potential 4Fe-4S ferredoxins. Functions in anaerobic electron transport in most purple and in some other photosynthetic bacteria and in at least one genus (Paracoccus) of halophilic, denitrifying bacteria. This is High-potential iron-sulfur protein (hip) from Rhodocyclus tenuis (Rhodospirillum tenue).